The chain runs to 170 residues: Adenine phosphoribosyltransferase (170 aa).

Belongs to the purine/pyrimidine phosphoribosyltransferase family. In terms of assembly, homodimer.

The protein localises to the cytoplasm. It carries out the reaction AMP + diphosphate = 5-phospho-alpha-D-ribose 1-diphosphate + adenine. The protein operates within purine metabolism; AMP biosynthesis via salvage pathway; AMP from adenine: step 1/1. Catalyzes a salvage reaction resulting in the formation of AMP, that is energically less costly than de novo synthesis. The polypeptide is Adenine phosphoribosyltransferase (Streptococcus sanguinis (strain SK36)).